The primary structure comprises 190 residues: MLAHLRPALVLLLVLTGLTGFAYPLLSTAIAQAAFPHQAHGSLVRKDGRVVGSTLLGQPFDDPRYFWGRPSATSPVPYAGQASAGSNLGPTNPALAEAVKARVDALRAADPEGAAPVPVDLVTASGSGLDPHISPAGAEHQVRRVARARGLSEAEVRRFVARHTEGRLLGLLGEPHVNVLLLNLALDGAR.

Residues 10 to 30 form a helical membrane-spanning segment; sequence VLLLVLTGLTGFAYPLLSTAI.

It belongs to the KdpC family. In terms of assembly, the system is composed of three essential subunits: KdpA, KdpB and KdpC.

Its subcellular location is the cell inner membrane. Part of the high-affinity ATP-driven potassium transport (or Kdp) system, which catalyzes the hydrolysis of ATP coupled with the electrogenic transport of potassium into the cytoplasm. This subunit acts as a catalytic chaperone that increases the ATP-binding affinity of the ATP-hydrolyzing subunit KdpB by the formation of a transient KdpB/KdpC/ATP ternary complex. This Sorangium cellulosum (strain So ce56) (Polyangium cellulosum (strain So ce56)) protein is Potassium-transporting ATPase KdpC subunit.